Reading from the N-terminus, the 249-residue chain is Ribosomal RNA small subunit methyltransferase G (249 aa).

Residues glycine 88, phenylalanine 93, 111–113 (DAT), 139–140 (AE), and arginine 158 contribute to the S-adenosyl-L-methionine site. An intrachain disulfide couples cysteine 164 to cysteine 249. Residues 245 to 246 (RH) form an RNA binding region.

The protein belongs to the methyltransferase superfamily. RNA methyltransferase RsmG family.

It localises to the cytoplasm. It carries out the reaction guanosine(527) in 16S rRNA + S-adenosyl-L-methionine = N(7)-methylguanosine(527) in 16S rRNA + S-adenosyl-L-homocysteine. Specifically methylates the N7 position of guanine in position 527 of 16S rRNA. Shows a marked preference for deproteinized 16S rRNA as substrate and is completely inactive with native 30S subunits as substrate. The protein is Ribosomal RNA small subunit methyltransferase G of Thermus thermophilus (strain ATCC 27634 / DSM 579 / HB8).